Here is a 154-residue protein sequence, read N- to C-terminus: Small ribosomal subunit protein bS18 (154 aa).

The segment at 1-82 is disordered; it reads MEKKTTKKAT…PFAKYNRGYP (82 aa). The segment covering 8–19 has biased composition (low complexity); sequence KATASKTTTTKK. Residues 20–32 show a composition bias toward basic and acidic residues; sequence AAAEKTEIKETKK. Over residues 33 to 49 the composition is skewed to low complexity; that stretch reads TTTTKTSTAKKATTASV. The segment covering 50–69 has biased composition (basic and acidic residues); it reads EKTEVKETKKSSDNKKEFNP.

Belongs to the bacterial ribosomal protein bS18 family. Part of the 30S ribosomal subunit. Forms a tight heterodimer with protein bS6.

Functionally, binds as a heterodimer with protein bS6 to the central domain of the 16S rRNA, where it helps stabilize the platform of the 30S subunit. This chain is Small ribosomal subunit protein bS18, found in Malacoplasma penetrans (strain HF-2) (Mycoplasma penetrans).